The primary structure comprises 285 residues: Chemotaxis protein LafT (285 aa).

Helical transmembrane passes span 4–23 (FLGV…WAGG), 34–51 (FLII…GNPP), 171–191 (ALPG…MQAI), and 201–222 (HVAA…GLDP). The Cytoplasmic portion of the chain corresponds to 223-285 (LSNAMAQRVK…MEKWLAEQEG (63 aa)).

This sequence belongs to the MotA family.

It is found in the cell inner membrane. Its function is as follows. Required for rotation of the flagellar motor. Probable transmembrane proton channel. The protein is Chemotaxis protein LafT (lafT) of Vibrio parahaemolyticus serotype O3:K6 (strain RIMD 2210633).